The following is a 353-amino-acid chain: Tectonin-2 (353 aa).

A Ricin B-type lectin domain is found at 44-93 (WIFDNDGYIRLAANHNLVLDVNGGAAKEGNTVLSYPDKKDHAKNQLWVNK). Repeat copies occupy residues 138 to 173 (SAWE…HWDG), 174 to 210 (SKWH…DRGT), 211 to 247 (NKWS…NADS), 248 to 282 (NSWT…HYNG), 283 to 318 (NSWD…LKHG), and 319 to 353 (KDWE…KALL). The 6 X approximate tandem repeats stretch occupies residues 138 to 353 (SAWERHEGEL…SAHNIYKALL (216 aa)).

This sequence belongs to the tectonin family.

It localises to the cell surface. Its subcellular location is the cytoplasmic vesicle membrane. In terms of biological role, probably involved in bacterial recognition. May be a lectin that function as part of a transmembrane signaling complex during phagocytosis. This is Tectonin-2 (TECB) from Physarum polycephalum (Slime mold).